The following is a 786-amino-acid chain: MLERTLRVLEYNKVKEQLLEHTASSLGRDKVKHLVPSTDFEEIVEMQDTTDEAAKVIRLKGSAPLGGITDIRSNVKRAKIGSMLSPNELLDIANTMYGSRNMKRFIEDMVDNGVELPILETHVAQIVSLYDLEKKITNCIGDGGEVVDSASDKLRGIRTQIRTAESRIREKLENMTRSSNAQKMLSDSIVTIRNERYVIPVKQEYRGVYGGIVHDQSASGQTLFIEPQVIVELNNALQEARVKEKQEIERILLMLTEEVAVEADIVLSNVEVVANLDFIFAKAFYAKRIKATKPIVNNERYMDLRQARHPLIDPEVIVPNNIMLGKDFTTIVITGPNTGGKTVTLKTVGICVLMAQSGLHIPVMDESEICVFKNIFADIGDEQSIEQSLSTFSSHMVNIVDILEKADFESLVLFDELGAGTDPQEGAALAISILDEVCNRGARVVATTHYPELKAYGYNREQVINASVEFDVNTLSPTHKLLIGVPGRSNAFEISKRLGLSNRVIDQARNHISTDTNKIENMIAKLEESQKNAERDWNEAEALRKQSEKLHRELQRQIIEFNEERDERLLKAQKEGEEKVEAAKKEAEGIIQELRQLRKAQLANVKDHELIEAKSRLEGAAPELVKKQKVNVKNTAPKQQLRAGDEVKVLTFGQKGQLLEKVSDTEWSVQIGILKMKVKESNMEYINTPKQTEKKAVATVKGRDYHVSLELDLRGERFENAMARVEKYLDDAQLASYPRVSIIHGKGTGALRQGVQDYLKKHRGVKTFRYGDMGEGGLGVTVVELK.

335 to 342 (GPNTGGKT) serves as a coordination point for ATP. The 76-residue stretch at 711–786 (LDLRGERFEN…GLGVTVVELK (76 aa)) folds into the Smr domain.

Belongs to the DNA mismatch repair MutS family. MutS2 subfamily. In terms of assembly, homodimer. Binds to stalled ribosomes, contacting rRNA.

Its function is as follows. Endonuclease that is involved in the suppression of homologous recombination and thus may have a key role in the control of bacterial genetic diversity. Functionally, acts as a ribosome collision sensor, splitting the ribosome into its 2 subunits. Detects stalled/collided 70S ribosomes which it binds and splits by an ATP-hydrolysis driven conformational change. Acts upstream of the ribosome quality control system (RQC), a ribosome-associated complex that mediates the extraction of incompletely synthesized nascent chains from stalled ribosomes and their subsequent degradation. Probably generates substrates for RQC. The sequence is that of Endonuclease MutS2 from Bacillus anthracis (strain A0248).